Consider the following 31-residue polypeptide: Cliotide T11 (31 aa).

The cyclopeptide (Gly-Asn) cross-link spans glycine 1–asparagine 31. 3 cysteine pairs are disulfide-bonded: cysteine 4–cysteine 21, cysteine 8–cysteine 23, and cysteine 13–cysteine 28.

Post-translationally, contains 3 disulfide bonds. This is a cyclic peptide. In terms of tissue distribution, expressed in seed but not in root, nodule, flower, stem, shoot, leaf and pod (at protein level).

Probably participates in a plant defense mechanism. The chain is Cliotide T11 from Clitoria ternatea (Butterfly pea).